The primary structure comprises 1206 residues: STE20-like serine/threonine-protein kinase (1206 aa).

Ser-14 is subject to Phosphoserine. The Protein kinase domain occupies 34-292 (WEIIGELGDG…TSQLLQHPFV (259 aa)). ATP-binding positions include 40–48 (LGDGAFGKV) and Lys-63. Catalysis depends on Asp-155, which acts as the Proton acceptor. Phosphothreonine is present on Thr-183. Phosphoserine is present on Ser-189. The disordered stretch occupies residues 308–352 (KAEVTEEVEDGKEEDDDDETESALPIPANKRASSDLSIASSEEDK). Residues 312 to 328 (TEEVEDGKEEDDDDETE) are compositionally biased toward acidic residues. Phosphoserine is present on residues Ser-340, Ser-341, Ser-344, Ser-347, Ser-348, Ser-354, and Ser-372. The segment at 364 to 440 (SERTEHNTSG…ESQPDTEDQQ (77 aa)) is disordered. Composition is skewed to basic and acidic residues over residues 381–395 (LSEKPTPEGPEKTVD) and 420–429 (ENGREKKRPQ). Positions 468–492 (EEDRNEENQEIIENKLTQSEEIKDI) form a coiled coil. 2 disordered regions span residues 515 to 761 (DNEV…SSSD) and 773 to 792 (TKDSGSVSLQETRRQKKTLK). Basic and acidic residues predominate over residues 520–536 (FTKEETQEKLGKDDKTH). A phosphoserine mark is found at Ser-545 and Ser-563. The segment covering 556-565 (TQKSAEQSQD) has biased composition (polar residues). Positions 584–609 (KATEGPEAHGAEEEPRSGERVEDKQL) are enriched in basic and acidic residues. The span at 634–643 (EEPETDEVDQ) shows a compositional bias: acidic residues. 3 positions are modified to phosphoserine: Ser-645, Ser-649, and Ser-668. The span at 691–702 (AEPQAPAASQAS) shows a compositional bias: low complexity. Polar residues predominate over residues 747-757 (TDSGTGSTVEN). 2 positions are modified to phosphoserine: Ser-776 and Ser-778. At Thr-813 the chain carries Phosphothreonine. Ser-817 carries the post-translational modification Phosphoserine. A coiled-coil region spans residues 825-1037 (LRRQELRELR…LKNRQTQERA (213 aa)). Residues 874 to 909 (DQEIENLEKQQKQTIERLEQEHTNRLRDEAKRIKGE) enclose the UVR domain. Thr-1065 carries the post-translational modification Phosphothreonine. A coiled-coil region spans residues 1077–1151 (AAQEEKRQKN…ELKEWREKLR (75 aa)). The segment covering 1079–1099 (QEEKRQKNERMAQHQKHESQM) has biased composition (basic and acidic residues). Disordered regions lie at residues 1079–1100 (QEEKRQKNERMAQHQKHESQMR) and 1181–1206 (LNPSAQSRGCLQTSHPSSTRAPAWAG). Residues 1181-1200 (LNPSAQSRGCLQTSHPSSTR) are compositionally biased toward polar residues.

The protein belongs to the protein kinase superfamily. STE Ser/Thr protein kinase family. STE20 subfamily. In terms of processing, proteolytically cleaved by caspase-3. Autophosphorylated.

It is found in the cytoplasm. It catalyses the reaction L-seryl-[protein] + ATP = O-phospho-L-seryl-[protein] + ADP + H(+). The enzyme catalyses L-threonyl-[protein] + ATP = O-phospho-L-threonyl-[protein] + ADP + H(+). Mediates apoptosis and actin stress fiber dissolution. The protein is STE20-like serine/threonine-protein kinase (Slk) of Rattus norvegicus (Rat).